The sequence spans 240 residues: Biotin--[acetyl-CoA-carboxylase] ligase (240 aa).

The region spanning 1–176 (MLARTDSTNA…AFARWQAQLD (176 aa)) is the BPL/LPL catalytic domain. Biotin contacts are provided by residues 7–9 (STN), Gln30, 34–36 (RGR), and Lys102.

It belongs to the biotin--protein ligase family.

It carries out the reaction biotin + L-lysyl-[protein] + ATP = N(6)-biotinyl-L-lysyl-[protein] + AMP + diphosphate + H(+). Its function is as follows. Activates biotin to form biotinyl-5'-adenylate and transfers the biotin moiety to biotin-accepting proteins. The polypeptide is Biotin--[acetyl-CoA-carboxylase] ligase (birA) (Paracoccus denitrificans).